The chain runs to 357 residues: MQVQLTNRQQHILWATVRHYIATAEPVGSKALIEEYDLGVSSATIRNVMGVLEKSGLLYQPHTSAGRVPSDSGYRIYVDKLITPSEVLAKEVESALQQRLQWEDWSLEILLQGAAQILASLSGCISLITMPQTNTATVRHLQLMQIEAGRIMLILVTDNYETHSKLMDLPPGRSEKPDPEVIDRELQIVSNFLNSHLRGRSLLEITTLDWSQLDREFQLYGEFLKTSVAGLANRTAAPAATQIMVRGVAEVLRQPEFSQLQQVQTIIQLLEEEQEQLWRLIFEEPELEDTNKSKVTVRIGAENPLEPIRTCSLISSTYRRGAVPLGSVGSSRPSRLDYENAIAVVAAAADYLSEAFS.

It belongs to the HrcA family.

In terms of biological role, negative regulator of class I heat shock genes (grpE-dnaK-dnaJ and groELS operons). Prevents heat-shock induction of these operons. This chain is Heat-inducible transcription repressor HrcA, found in Anabaena sp. (strain L31).